Consider the following 121-residue polypeptide: SLIELTKMVFQETGKNPVTYYTLYGCNCGVGRRGKPKDATDRCCFVHRCCYKKLTGCDPKKDRYSYSWENKAIVCGEKNPCLKELCECDKAVAICLRKNLGTYDKNYRFTMKFLCDKPEKC.

7 cysteine pairs are disulfide-bonded: Cys26–Cys115, Cys28–Cys44, Cys43–Cys95, Cys49–Cys121, Cys50–Cys88, Cys57–Cys81, and Cys75–Cys86.

This sequence belongs to the phospholipase A2 family. Group II subfamily. R49 sub-subfamily. As to quaternary structure, homodimer. As to expression, expressed by the venom gland.

The protein resides in the secreted. In terms of biological role, snake venom phospholipase A2 homolog that induces myonecrosis, and edema. Has low myotoxic activity. The chain is Basic phospholipase A2 homolog zhaoermiatoxin from Protobothrops mangshanensis (Mangshan pitviper).